The primary structure comprises 250 residues: uncharacterized protein (250 aa).

The N-terminal stretch at 1-19 (MAKPRNAAESKAAKAQANA) is a signal peptide. 2 consecutive transmembrane segments (helical) span residues 51–71 (IGAF…AGGF) and 73–93 (MFTM…VIFG). The disordered stretch occupies residues 226 to 250 (AGVMPKGPLPTTAKMRSVQRTVRRK).

The protein resides in the cell membrane. This is an uncharacterized protein from Mycobacterium tuberculosis (strain CDC 1551 / Oshkosh).